The primary structure comprises 75 residues: Cruzioseptin-6 (75 aa).

The first 22 residues, 1–22, serve as a signal peptide directing secretion; sequence MAYLKKSLFLVLFLGLVSLSIC. A propeptide spanning residues 23-43 is cleaved from the precursor; sequence EEEKREEENEEEQEDDDQSEE. The interval 24 to 44 is disordered; it reads EEKREEENEEEQEDDDQSEEK. The segment covering 30–41 has biased composition (acidic residues); the sequence is ENEEEQEDDDQS.

Expressed by the skin glands.

It is found in the secreted. Functionally, has antimicrobial activity. The protein is Cruzioseptin-6 of Cruziohyla calcarifer (Splendid leaf frog).